Reading from the N-terminus, the 247-residue chain is UPF0280 protein MMP1236 (247 aa).

This sequence belongs to the UPF0280 family.

The sequence is that of UPF0280 protein MMP1236 from Methanococcus maripaludis (strain DSM 14266 / JCM 13030 / NBRC 101832 / S2 / LL).